The primary structure comprises 552 residues: Rqc2 homolog RqcH (552 aa).

2 coiled-coil regions span residues R271–E317 and N357–Q398.

The protein belongs to the NEMF family. Associates with stalled 50S ribosomal subunits, binds to RqcH. Recombinant protein interacts with the N-terminal 30 kDa of human fibronectin (FN1).

Key component of the ribosome quality control system (RQC), a ribosome-associated complex that mediates the extraction of incompletely synthesized nascent chains from stalled ribosomes and their subsequent degradation. RqcH recruits Ala-charged tRNA, and with RqcP directs the elongation of stalled nascent chains on 50S ribosomal subunits, leading to non-templated C-terminal alanine extensions (Ala tail). The Ala tail promotes nascent chain degradation. May add between 1 and at least 8 Ala residues. Binds to stalled 50S ribosomal subunits. The chain is Rqc2 homolog RqcH from Streptococcus suis (strain 05ZYH33).